Here is a 44-residue protein sequence, read N- to C-terminus: F420-non-reducing hydrogenase vhu subunit U (44 aa).

The Ni(2+) site is built by Sec20 and Cys23. Position 20 (Sec20) is a non-standard amino acid, selenocysteine. A propeptide spans 27 to 44 (MIVEDAEGNVVFEIVNDE) (removed in mature form).

The protein belongs to the [NiFe]/[NiFeSe] hydrogenase large subunit family. The F420-non-reducing hydrogenase vhu is composed of four subunits; VhuA, VhuD, VhuG and VhuU. It depends on Ni(2+) as a cofactor.

The chain is F420-non-reducing hydrogenase vhu subunit U (vhuU) from Methanococcus voltae.